The chain runs to 484 residues: F-box/LRR-repeat protein At3g59210 (484 aa).

The F-box domain maps to 6 to 54 (KDIINCLPDNLLCQILSNLSTKEAALTSLLSKRWRYLFALVPNLDFDVL). 5 LRR repeats span residues 144–170 (KIGPKDGPRVKLRNVCLPKLKTLNLDS), 172–197 (VFEEGKIGFAKLLSGCPVLEELSLLN), 205–234 (SCSVSSKILKRLTLYCAHSSRNPKSVSFDT), 303–334 (TLYLSYDTLETLNLCCQVIPVFNNLTHLTIES), and 335–360 (HPELGWESLPNLLKSCPNLGTLVFQG).

The protein is F-box/LRR-repeat protein At3g59210 of Arabidopsis thaliana (Mouse-ear cress).